The primary structure comprises 884 residues: E3 SUMO-protein ligase SIZ1 (884 aa).

Positions 11–45 (LSYFRIKELKDVLTQLGLSKQGKKQELVDRILTLL) constitute an SAP domain. The tract at residues 84–103 (LASKGQVSSDTSNLKVKGEP) is disordered. A compositionally biased stretch (polar residues) spans 88–97 (GQVSSDTSNL). Lys-100 is covalently cross-linked (Glycyl lysine isopeptide (Lys-Gly) (interchain with G-Cter in SUMO)). A PHD-type zinc finger spans residues 112–168 (KVRCVCGNSLETDSMIQCEDPRCHVWQHVGCVILPDKPMDGNPPLPESFYCEICRLT). The segment at 346 to 429 (SDSDIEVVAD…FNRITSKMKH (84 aa)) adopts an SP-RING-type zinc-finger fold. Zn(2+)-binding residues include Cys-379, His-381, Cys-402, and Cys-405. Lys-488 is covalently cross-linked (Glycyl lysine isopeptide (Lys-Gly) (interchain with G-Cter in SUMO)). Disordered regions lie at residues 753–778 (PSLQ…ADMS), 792–824 (GDSA…MDTT), and 836–869 (DSRQ…QTRH). Composition is skewed to polar residues over residues 766–778 (SAQS…ADMS) and 803–824 (ATTN…MDTT). A compositionally biased stretch (basic and acidic residues) spans 837-847 (SRQDKAKKQRS).

Belongs to the PIAS family. As to quaternary structure, interacts (via PHD domain) with SCE1, GTE3 and GTE5. Post-translationally, autosumoylated at Lys-100 and Lys-488. In terms of tissue distribution, ubiquitous.

Its subcellular location is the nucleus speckle. The protein operates within protein modification; protein sumoylation. Functionally, E3 SUMO protein ligase involved in regulation processes. Mediates SUMO/ attachment to PHR1, a MYB transcriptional activator controlling the phosphate deficiency responses. Functions as an upstream negative regulator of salicylic acid (SA) accumulation and subsequent SA-mediated systemic acquired resistance (SAR) signaling. Probably not involved in jasmonic acid (JA)-mediated defense response. Participates in abiotic stress-induced sumoylation. Controls heat shock-induced SUMO1 and SUMO2 conjugation and facilitates basal thermotolerance. Involved in freezing tolerance by mediating sumoylation of ICE1, a transcription activator of the cold signaling regulator CBF3/DREB1A. Acts as a positive regulator of drought stress tolerance. Acts as a floral repressor that promotes FLC expression by repressing FLD activity through sumoylation. Acts as a negative regulator of abscisic acid (ABA) signaling through ABI5 sumoylation. Mediates sumoylation of SCE1, GTE3 and GTE5. Functions as a negative regulator of SnRK1 signaling through sumoylation of several components of the SnRK1 complex. This chain is E3 SUMO-protein ligase SIZ1, found in Arabidopsis thaliana (Mouse-ear cress).